Reading from the N-terminus, the 118-residue chain is Small ribosomal subunit protein uS13 (118 aa).

Residues 94-118 form a disordered region; that stretch reads GLPVRGQRTKTNARTRKGPRKPIRK.

Belongs to the universal ribosomal protein uS13 family. Part of the 30S ribosomal subunit. Forms a loose heterodimer with protein S19. Forms two bridges to the 50S subunit in the 70S ribosome.

In terms of biological role, located at the top of the head of the 30S subunit, it contacts several helices of the 16S rRNA. In the 70S ribosome it contacts the 23S rRNA (bridge B1a) and protein L5 of the 50S subunit (bridge B1b), connecting the 2 subunits; these bridges are implicated in subunit movement. Contacts the tRNAs in the A and P-sites. The chain is Small ribosomal subunit protein uS13 from Marinobacter nauticus (strain ATCC 700491 / DSM 11845 / VT8) (Marinobacter aquaeolei).